Reading from the N-terminus, the 519-residue chain is Cytochrome P450 4A22 (519 aa).

The propeptide occupies Met1–Ser4. Glu321 contacts heme. Residue Ser440 is modified to Phosphoserine. Cys457 provides a ligand contact to heme.

This sequence belongs to the cytochrome P450 family.

The protein localises to the endoplasmic reticulum membrane. It localises to the microsome membrane. It catalyses the reaction an omega-methyl-long-chain fatty acid + reduced [NADPH--hemoprotein reductase] + O2 = an omega-hydroxy-long-chain fatty acid + oxidized [NADPH--hemoprotein reductase] + H2O + H(+). In terms of biological role, catalyzes the omega- and (omega-1)-hydroxylation of various fatty acids such as laurate and palmitate. Shows no activity towards arachidonic acid and prostaglandin A1. Lacks functional activity in the kidney and does not contribute to renal 20-hydroxyeicosatetraenoic acid (20-HETE) biosynthesis. The protein is Cytochrome P450 4A22 (CYP4A22) of Homo sapiens (Human).